The primary structure comprises 172 residues: Type IV secretion system putative outer membrane lipoprotein BAB2_0057 (172 aa).

Positions 1 to 15 (MRTLVMVACAVSLAA) are cleaved as a signal peptide. Residue cysteine 16 is the site of N-palmitoyl cysteine attachment. A lipid anchor (S-diacylglycerol cysteine) is attached at cysteine 16. One can recognise an OmpA-like domain in the interval 58–172 (WPARPPKQTV…RRVDIEILRK (115 aa)).

The protein resides in the cell outer membrane. Functionally, the virB operon is essential for intracellular survival and is not involved in the invasion process. Constitutes a major determinant of virulence in mice. This protein is essential for pathogenesis in mice but is not required for intracellular survival. This chain is Type IV secretion system putative outer membrane lipoprotein BAB2_0057, found in Brucella abortus (strain 2308).